We begin with the raw amino-acid sequence, 769 residues long: Intron Large complex component GCFC2 (769 aa).

Disordered regions lie at residues 1–122 (MALR…PIVE) and 134–212 (RKRE…DENQ). 4 positions are modified to phosphoserine: Ser-16, Ser-17, Ser-19, and Ser-85. Thr-86 is subject to Phosphothreonine. Phosphoserine occurs at positions 118 and 169. Residues 190–201 (RMAEETSIRSEE) show a composition bias toward basic and acidic residues. The segment covering 202-212 (SSEESQEDENQ) has biased composition (acidic residues). Phosphoserine occurs at positions 203 and 206. The stretch at 256–308 (NLEIIKKQLNNRLTLLQESHRSHQREYEKYEQDIKSSKTAIQNLESASDHAQN) forms a coiled coil.

It belongs to the GCF family. Found in the Intron Large (IL) complex, a post-mRNA release spliceosomal complex containing the excised intron, U2, U5 and U6 snRNPs, and splicing factors. Interacts with TFIP11 and DHX15.

It is found in the nucleus. Its subcellular location is the nucleoplasm. It localises to the nucleolus. In terms of biological role, involved in pre-mRNA splicing through regulating spliceosome C complex formation. May play a role during late-stage splicing events and turnover of excised introns. This chain is Intron Large complex component GCFC2 (Gcfc2), found in Mus musculus (Mouse).